We begin with the raw amino-acid sequence, 582 residues long: Histone deacetylase 9-B (582 aa).

The interaction with mef2 stretch occupies residues 146-195; it reads SNEVKQKLQEFLLSKSTKDITLNGIPQKITQSSKLWYTASHHTSLEQSSP. Polar residues predominate over residues 189 to 205; sequence SLEQSSPPLGGASSSCK. Disordered regions lie at residues 189 to 254, 270 to 314, 409 to 447, and 496 to 567; these read SLEQ…KEGN, TASS…QSRL, LSSG…RTQS, and VHLQ…NQSS. Basic and acidic residues-rich tracts occupy residues 213–224 and 238–253; these read DYRDDFPLRKTV and KVAE…RKEG. The segment covering 270-289 has biased composition (low complexity); sequence TASSSAPGSGPSSPNGACSA. The segment covering 295–314 has biased composition (polar residues); that stretch reads GPSSLPVTTRTERWPSQSRL.

This sequence belongs to the histone deacetylase family. HD type 2 subfamily. Homodimer. Interacts with mef2.

Its subcellular location is the nucleus. The enzyme catalyses N(6)-acetyl-L-lysyl-[histone] + H2O = L-lysyl-[histone] + acetate. Devoided of intrinsic deacetylase activity, promotes the deacetylation of lysine residues on the N-terminal part of the core histones (H2A, H2B, H3 and H4) by recruiting other histone deacetylases. Histone deacetylation gives a tag for epigenetic repression and plays an important role in transcriptional regulation, cell cycle progression and developmental events. Represses MEF2-dependent transcription. The protein is Histone deacetylase 9-B (hdac9b) of Danio rerio (Zebrafish).